The chain runs to 520 residues: 2-isopropylmalate synthase (520 aa).

The Pyruvate carboxyltransferase domain maps to 12-274; it reads VLIFDTTLRD…TTGIDTTQIM (263 aa). Mn(2+)-binding residues include Asp-21, His-209, His-211, and Asn-245. Positions 398 to 520 are regulatory domain; sequence RLLSLTVIAG…RLHAQHAAAE (123 aa).

The protein belongs to the alpha-IPM synthase/homocitrate synthase family. LeuA type 1 subfamily. In terms of assembly, homodimer. Mn(2+) serves as cofactor.

The protein resides in the cytoplasm. The enzyme catalyses 3-methyl-2-oxobutanoate + acetyl-CoA + H2O = (2S)-2-isopropylmalate + CoA + H(+). It participates in amino-acid biosynthesis; L-leucine biosynthesis; L-leucine from 3-methyl-2-oxobutanoate: step 1/4. Its function is as follows. Catalyzes the condensation of the acetyl group of acetyl-CoA with 3-methyl-2-oxobutanoate (2-ketoisovalerate) to form 3-carboxy-3-hydroxy-4-methylpentanoate (2-isopropylmalate). The sequence is that of 2-isopropylmalate synthase from Methylobacterium nodulans (strain LMG 21967 / CNCM I-2342 / ORS 2060).